Consider the following 829-residue polypeptide: Dipeptidyl peptidase family member 2 (829 aa).

Topologically, residues 1-27 (MENDNYDVEEQGCSVFNGKHGYFARSC) are cytoplasmic. A helical; Signal-anchor for type II membrane protein membrane pass occupies residues 28-48 (CVVFILIICVIFVFSVIFTFM). Residues 49–829 (QNPINLNSDN…DCFKSNLDLL (781 aa)) are Extracellular-facing. Asn-61, Asn-66, Asn-183, Asn-209, Asn-314, and Asn-359 each carry an N-linked (GlcNAc...) asparagine glycan. Residues Cys-514 and Cys-533 are joined by a disulfide bond. The active-site Charge relay system is Ser-691. The cysteines at positions 711 and 821 are disulfide-linked. N-linked (GlcNAc...) asparagine glycosylation is present at Asn-754. Catalysis depends on charge relay system residues Asp-768 and His-800.

Belongs to the peptidase S9B family. DPPIV subfamily.

It localises to the cell membrane. Functionally, removes N-terminal dipeptides sequentially from polypeptides. Essential for control of distal tip cell migration. In Caenorhabditis elegans, this protein is Dipeptidyl peptidase family member 2 (dpf-2).